Consider the following 424-residue polypeptide: Keratin, type I cytoskeletal 20 (424 aa).

Positions 1–69 are head; it reads MDFSRRSFHR…TGGGDLFVGN (69 aa). Position 13 is a phosphoserine; by MAPKAPK2, MAPKAPK3 and PKC (Ser13). Positions 70–105 are coil 1A; that stretch reads EKMAMQNLNDRLASYLEKVRTLEQSNSKLEVQIKQW. The region spanning 70–381 is the IF rod domain; it reads EKMAMQNLND…RLLEGEDVKT (312 aa). Residues 106 to 123 are linker 1; sequence YETNAPRAGRDYSAYYRQ. Residues 124–215 form a coil 1B region; sequence IEELRSQIKD…KEHQEEVDGL (92 aa). The segment at 216–238 is linker 12; sequence HKHLGNTVNVEVDAAPGLNLGVI. Residues 239 to 377 are coil 2; the sequence is MNEMRQKYEV…ATYRRLLEGE (139 aa). The tract at residues 378–424 is tail; that stretch reads DVKTTEYQLSTLEERDIKKTRKIKTVVQEVVDGKVVSSEVKEVEENI.

This sequence belongs to the intermediate filament family. As to quaternary structure, heterotetramer of two type I and two type II keratins. Associates with KRT8. In terms of processing, hyperphosphorylation at Ser-13 occurs during the early stages of apoptosis but becomes less prominent during the later stages. Phosphorylation at Ser-13 also increases in response to stress brought on by cell injury. Proteolytically cleaved by caspases during apoptosis. Cleavage occurs at Asp-228. Expressed predominantly in the intestinal epithelium. Expressed in luminal cells of colonic mucosa. Also expressed in the Merkel cells of keratinized oral mucosa; specifically at the tips of some rete ridges of the gingival mucosa, in the basal layer of the palatal mucosa and in the taste buds of lingual mucosa.

Its subcellular location is the cytoplasm. Functionally, plays a significant role in maintaining keratin filament organization in intestinal epithelia. When phosphorylated, plays a role in the secretion of mucin in the small intestine. The protein is Keratin, type I cytoskeletal 20 (KRT20) of Homo sapiens (Human).